The sequence spans 220 residues: Ribose-5-phosphate isomerase A (220 aa).

Residues Thr25 to Thr28, Asp80 to Asp83, and Lys93 to Gly96 each bind substrate. The active-site Proton acceptor is Glu102. A substrate-binding site is contributed by Lys120.

This sequence belongs to the ribose 5-phosphate isomerase family. As to quaternary structure, homodimer.

The enzyme catalyses aldehydo-D-ribose 5-phosphate = D-ribulose 5-phosphate. The protein operates within carbohydrate degradation; pentose phosphate pathway; D-ribose 5-phosphate from D-ribulose 5-phosphate (non-oxidative stage): step 1/1. Its function is as follows. Catalyzes the reversible conversion of ribose-5-phosphate to ribulose 5-phosphate. The sequence is that of Ribose-5-phosphate isomerase A from Bacillus thuringiensis subsp. konkukian (strain 97-27).